A 782-amino-acid chain; its full sequence is Phosphoribosylformylglycinamidine synthase subunit PurL (782 aa).

Histidine 50 is a catalytic residue. Residues tyrosine 53 and lysine 92 each coordinate ATP. Position 94 (glutamate 94) interacts with Mg(2+). Substrate is bound by residues 95–98 and arginine 117; that span reads SHNH. Residue histidine 96 is the Proton acceptor of the active site. Aspartate 118 is a Mg(2+) binding site. Glutamine 241 is a substrate binding site. Mg(2+) is bound at residue aspartate 269. 313-315 contributes to the substrate binding site; it reads ESQ. The ATP site is built by aspartate 520 and glycine 557. A Mg(2+)-binding site is contributed by asparagine 558. Serine 560 lines the substrate pocket.

The protein belongs to the FGAMS family. In terms of assembly, monomer. Part of the FGAM synthase complex composed of 1 PurL, 1 PurQ and 2 PurS subunits.

The protein localises to the cytoplasm. It catalyses the reaction N(2)-formyl-N(1)-(5-phospho-beta-D-ribosyl)glycinamide + L-glutamine + ATP + H2O = 2-formamido-N(1)-(5-O-phospho-beta-D-ribosyl)acetamidine + L-glutamate + ADP + phosphate + H(+). It functions in the pathway purine metabolism; IMP biosynthesis via de novo pathway; 5-amino-1-(5-phospho-D-ribosyl)imidazole from N(2)-formyl-N(1)-(5-phospho-D-ribosyl)glycinamide: step 1/2. Part of the phosphoribosylformylglycinamidine synthase complex involved in the purines biosynthetic pathway. Catalyzes the ATP-dependent conversion of formylglycinamide ribonucleotide (FGAR) and glutamine to yield formylglycinamidine ribonucleotide (FGAM) and glutamate. The FGAM synthase complex is composed of three subunits. PurQ produces an ammonia molecule by converting glutamine to glutamate. PurL transfers the ammonia molecule to FGAR to form FGAM in an ATP-dependent manner. PurS interacts with PurQ and PurL and is thought to assist in the transfer of the ammonia molecule from PurQ to PurL. The protein is Phosphoribosylformylglycinamidine synthase subunit PurL of Cyanothece sp. (strain PCC 7425 / ATCC 29141).